Reading from the N-terminus, the 276-residue chain is Hydroxymethylpyrimidine/phosphomethylpyrimidine kinase (276 aa).

Position 45 (glutamine 45) interacts with 4-amino-5-hydroxymethyl-2-methylpyrimidine.

It belongs to the ThiD family.

The catalysed reaction is 4-amino-5-hydroxymethyl-2-methylpyrimidine + ATP = 4-amino-2-methyl-5-(phosphooxymethyl)pyrimidine + ADP + H(+). The enzyme catalyses 4-amino-2-methyl-5-(phosphooxymethyl)pyrimidine + ATP = 4-amino-2-methyl-5-(diphosphooxymethyl)pyrimidine + ADP. It participates in cofactor biosynthesis; thiamine diphosphate biosynthesis; 4-amino-2-methyl-5-diphosphomethylpyrimidine from 5-amino-1-(5-phospho-D-ribosyl)imidazole: step 2/3. Its pathway is cofactor biosynthesis; thiamine diphosphate biosynthesis; 4-amino-2-methyl-5-diphosphomethylpyrimidine from 5-amino-1-(5-phospho-D-ribosyl)imidazole: step 3/3. Its function is as follows. Catalyzes the phosphorylation of hydroxymethylpyrimidine phosphate (HMP-P) to HMP-PP, and of HMP to HMP-P. This Staphylococcus aureus (strain Mu50 / ATCC 700699) protein is Hydroxymethylpyrimidine/phosphomethylpyrimidine kinase (thiD).